Consider the following 130-residue polypeptide: Protein MGF 360-1L (130 aa).

Transmembrane regions (helical) follow at residues 4–24 (FLGF…NVNC), 75–95 (IIRH…CVAF), and 109–129 (LLGL…QPFP).

It belongs to the asfivirus MGF 110 family.

It is found in the host membrane. Plays a role in virus cell tropism, and may be required for efficient virus replication in macrophages. This is Protein MGF 360-1L from Ornithodoros (relapsing fever ticks).